The following is a 342-amino-acid chain: 4-hydroxy-2-oxovalerate aldolase (342 aa).

The Pyruvate carboxyltransferase domain occupies 7–257 (IWITEVALRD…KTGVDLYKMM (251 aa)). 15-16 (RD) contributes to the substrate binding site. D16 is a Mn(2+) binding site. The active-site Proton acceptor is the H19. Substrate contacts are provided by S169 and H196. H196 and H198 together coordinate Mn(2+). Y287 contributes to the substrate binding site.

The protein belongs to the 4-hydroxy-2-oxovalerate aldolase family.

It catalyses the reaction (S)-4-hydroxy-2-oxopentanoate = acetaldehyde + pyruvate. This Geobacillus thermodenitrificans (strain NG80-2) protein is 4-hydroxy-2-oxovalerate aldolase (nbaI).